The following is a 133-amino-acid chain: Small ribosomal subunit protein uS8 (133 aa).

It belongs to the universal ribosomal protein uS8 family. In terms of assembly, part of the 30S ribosomal subunit. Contacts proteins S5 and S12.

One of the primary rRNA binding proteins, it binds directly to 16S rRNA central domain where it helps coordinate assembly of the platform of the 30S subunit. This is Small ribosomal subunit protein uS8 from Deinococcus geothermalis (strain DSM 11300 / CIP 105573 / AG-3a).